Here is a 183-residue protein sequence, read N- to C-terminus: Bifunctional protein PyrR (183 aa).

The short motif at 102-114 is the PRPP-binding element; sequence VVLVDDVLFSGRT.

The protein belongs to the purine/pyrimidine phosphoribosyltransferase family. PyrR subfamily.

It carries out the reaction UMP + diphosphate = 5-phospho-alpha-D-ribose 1-diphosphate + uracil. In terms of biological role, regulates the transcription of the pyrimidine nucleotide (pyr) operon in response to exogenous pyrimidines. Functionally, also displays a weak uracil phosphoribosyltransferase activity which is not physiologically significant. This Leifsonia xyli subsp. xyli (strain CTCB07) protein is Bifunctional protein PyrR.